A 544-amino-acid chain; its full sequence is Putative lipase ATG15 (544 aa).

Residues 1-45 (MVADFDSGWYEGAGDELGQGARNGVLRERLGGNEKAQVVRSRRKA) are Cytoplasmic-facing. A helical; Signal-anchor for type II membrane protein transmembrane segment spans residues 46–66 (VAWNVLMVLGLILYVLYSACF). Over 67 to 544 (AQARQWWRTN…NWFGYCTEYA (478 aa)) the chain is Lumenal. Asn-200, Asn-229, and Asn-234 each carry an N-linked (GlcNAc...) asparagine glycan. Ser-362 (charge relay system) is an active-site residue. The tract at residues 508-530 (PMPSSVASKPTPTPTSPGSPSST) is disordered.

It belongs to the AB hydrolase superfamily. Lipase family. In terms of assembly, binds to both phosphatidylinositol (PI) and phosphatidylinositol 3,5-bisphosphate (PIP2).

It is found in the endosome. The protein resides in the multivesicular body membrane. It localises to the prevacuolar compartment membrane. The catalysed reaction is a triacylglycerol + H2O = a diacylglycerol + a fatty acid + H(+). Functionally, lipase which is essential for lysis of subvacuolar cytoplasm to vacuole targeted bodies and intravacuolar autophagic bodies. Involved in the lysis of intravacuolar multivesicular body (MVB) vesicles. The intravacuolar membrane disintegration by ATG15 is critical to life span extension. The sequence is that of Putative lipase ATG15 (ATG15) from Eremothecium gossypii (strain ATCC 10895 / CBS 109.51 / FGSC 9923 / NRRL Y-1056) (Yeast).